A 205-amino-acid polypeptide reads, in one-letter code: Large ribosomal subunit protein uL4 (205 aa).

It belongs to the universal ribosomal protein uL4 family. Part of the 50S ribosomal subunit.

Its function is as follows. One of the primary rRNA binding proteins, this protein initially binds near the 5'-end of the 23S rRNA. It is important during the early stages of 50S assembly. It makes multiple contacts with different domains of the 23S rRNA in the assembled 50S subunit and ribosome. Forms part of the polypeptide exit tunnel. The protein is Large ribosomal subunit protein uL4 of Thermus thermophilus (strain ATCC BAA-163 / DSM 7039 / HB27).